Reading from the N-terminus, the 265-residue chain is Cytochrome c oxidase subunit 3 (265 aa).

The next 6 membrane-spanning stretches (helical) occupy residues 16 to 36, 41 to 61, 84 to 104, 162 to 182, 200 to 220, and 242 to 262; these read PWPISGSLGALATTVGGVMYM, GGATLLSLGLIFLLYTMFVWW, YGSILFIVSEVMSFFLFFWAS, AVYALVATVLLALVSTGFQGM, FLLATGFHGFHVIIGTLFLIV, and AWYWHFVDVVRLFPFVSIYWW.

The protein belongs to the cytochrome c oxidase subunit 3 family. Component of the cytochrome c oxidase (complex IV, CIV), a multisubunit enzyme composed of a catalytic core of 3 subunits and several supernumerary subunits. The complex exists as a monomer or a dimer and forms supercomplexes (SCs) in the inner mitochondrial membrane with ubiquinol-cytochrome c oxidoreductase (cytochrome b-c1 complex, complex III, CIII).

It localises to the mitochondrion inner membrane. The catalysed reaction is 4 Fe(II)-[cytochrome c] + O2 + 8 H(+)(in) = 4 Fe(III)-[cytochrome c] + 2 H2O + 4 H(+)(out). In terms of biological role, component of the cytochrome c oxidase, the last enzyme in the mitochondrial electron transport chain which drives oxidative phosphorylation. The respiratory chain contains 3 multisubunit complexes succinate dehydrogenase (complex II, CII), ubiquinol-cytochrome c oxidoreductase (cytochrome b-c1 complex, complex III, CIII) and cytochrome c oxidase (complex IV, CIV), that cooperate to transfer electrons derived from NADH and succinate to molecular oxygen, creating an electrochemical gradient over the inner membrane that drives transmembrane transport and the ATP synthase. Cytochrome c oxidase is the component of the respiratory chain that catalyzes the reduction of oxygen to water. Electrons originating from reduced cytochrome c in the intermembrane space (IMS) are transferred via the dinuclear copper A center (CU(A)) of subunit 2 and heme A of subunit 1 to the active site in subunit 1, a binuclear center (BNC) formed by heme A3 and copper B (CU(B)). The BNC reduces molecular oxygen to 2 water molecules using 4 electrons from cytochrome c in the IMS and 4 protons from the mitochondrial matrix. The sequence is that of Cytochrome c oxidase subunit 3 (COX3) from Zea mays (Maize).